A 306-amino-acid chain; its full sequence is Ribosomal protein L11 methyltransferase (306 aa).

S-adenosyl-L-methionine-binding residues include Thr-154, Gly-179, Asp-201, and Asn-242.

The protein belongs to the methyltransferase superfamily. PrmA family.

The protein localises to the cytoplasm. It carries out the reaction L-lysyl-[protein] + 3 S-adenosyl-L-methionine = N(6),N(6),N(6)-trimethyl-L-lysyl-[protein] + 3 S-adenosyl-L-homocysteine + 3 H(+). Its function is as follows. Methylates ribosomal protein L11. The polypeptide is Ribosomal protein L11 methyltransferase (Stenotrophomonas maltophilia (strain R551-3)).